The sequence spans 313 residues: Fucose-specific lectin (313 aa).

6 repeat units span residues 5–57, 58–109, 110–162, 163–208, 209–260, and 261–304. The 6 X approximate tandem repeats stretch occupies residues 5-304; it reads FLYTSKIAAI…SGKGWSIGAV (300 aa). Arg25, Glu37, Arg78, Glu90, Trp98, Gln102, Arg132, Glu147, and Trp154 together coordinate beta-L-fucose. 2 residues coordinate alpha-L-fucose: Arg78 and Glu90. Gln102 contributes to the alpha-L-fucose binding site. Trp154, Arg180, and Glu192 together coordinate alpha-L-fucose. Trp200 contributes to the beta-L-fucose binding site. Gly204 contacts alpha-L-fucose. 2 residues coordinate beta-L-fucose: Arg227 and Glu239. Trp246 lines the alpha-L-fucose pocket. Residue Trp299 participates in beta-L-fucose binding.

Belongs to the fungal fucose-specific lectin family. As to quaternary structure, forms homodimers. The two AAL monomers are associated via interactions between N-terminal and C-terminal peptides. Tyr-7 interacts via aromatic ring stacking with its counterpart on the other monomer, whereas Ser-284 interacts via hydrogen bonding with Asp-264 on the other monomer.

In terms of biological role, lectin that specifically binds to L-fucose. Has strongest preference for the alpha-1,6-fucosylated chain (core fucose) on glycoproteins among alpha-1,2-, alpha-1,3-, alpha-1,4-, and alpha-1,6-fucosylated chains. Might play a role in the differentiation of the fruiting body. Exhibits antifungal activity against Mucor racemosus and thus could act as an antifungal protein in natural ecosystems. The sequence is that of Fucose-specific lectin from Aleuria aurantia (Orange peel mushroom).